Consider the following 130-residue polypeptide: MAQVQYYGTGRRKSSVARVRLVPGEGRIVVNNREITEYIPFAALIEDVKQPLNITETANSYDVLVTVHGGGFSGQAGAIRHGISRALLEVDPEYRTSLKRAGLLTRDPRMKERKKYGLKGARRAPQFSKR.

Positions 105–130 are disordered; sequence TRDPRMKERKKYGLKGARRAPQFSKR. Residues 111 to 130 show a composition bias toward basic residues; the sequence is KERKKYGLKGARRAPQFSKR.

It belongs to the universal ribosomal protein uS9 family.

The polypeptide is Small ribosomal subunit protein uS9 (Bacillus pumilus (strain SAFR-032)).